The primary structure comprises 130 residues: Large ribosomal subunit protein uL14 (130 aa).

The protein belongs to the universal ribosomal protein uL14 family. Part of the 50S ribosomal subunit. Forms a cluster with proteins L3 and L19. In the 70S ribosome, L14 and L19 interact and together make contacts with the 16S rRNA in bridges B5 and B8.

Binds to 23S rRNA. Forms part of two intersubunit bridges in the 70S ribosome. The sequence is that of Large ribosomal subunit protein uL14 from Helicobacter pylori (strain P12).